We begin with the raw amino-acid sequence, 229 residues long: Glutamine amidotransferase-like class 1 domain-containing protein 1 (229 aa).

An N-terminal signal peptide occupies residues 1-34 (MKKQGAPVSGGGTERLTKPSCLMVGSAVAEGVSA). 2 N-linked (GlcNAc...) asparagine glycosylation sites follow: N154 and N212.

Belongs to the peptidase C56 family. As to quaternary structure, homotetramer. Component of the FERRY complex.

The protein localises to the secreted. It is found in the early endosome. Its function is as follows. Component of the FERRY complex (Five-subunit Endosomal Rab5 and RNA/ribosome intermediary). The FERRY complex directly interacts with mRNAs and RAB5A, and functions as a RAB5A effector involved in the localization and the distribution of specific mRNAs most likely by mediating their endosomal transport. The complex recruits mRNAs and ribosomes to early endosomes through direct mRNA-interaction. The chain is Glutamine amidotransferase-like class 1 domain-containing protein 1 from Xenopus laevis (African clawed frog).